A 494-amino-acid chain; its full sequence is DDB1- and CUL4-associated factor 4 (494 aa).

Residues 1–65 (MHQSSWKSRR…AGSSSVPDLP (65 aa)) are disordered. Residues 7 to 20 (KSRRHRRRGHRHSA) show a composition bias toward basic residues. Over residues 51-60 (STSSTAGSSS) the composition is skewed to low complexity. WD repeat units follow at residues 367–406 (FHDS…CIRQ) and 409–450 (GHVN…LLRT).

As to quaternary structure, interacts with DDB1 and CUL4A.

Its pathway is protein modification; protein ubiquitination. May function as a substrate receptor for CUL4-DDB1 E3 ubiquitin-protein ligase complex. This chain is DDB1- and CUL4-associated factor 4 (DCAF4), found in Bos taurus (Bovine).